The chain runs to 463 residues: Putative glycine--tRNA ligase, cytoplasmic (463 aa).

A disordered region spans residues 25 to 54 (TLEDSHAAKPETNAAIELPNKSKPEKSAVE). Residues 44–54 (NKSKPEKSAVE) are compositionally biased toward basic and acidic residues. Substrate is bound by residues Arg-153 and Glu-239. ATP-binding positions include 271-273 (RNE) and 281-286 (LRTREF). Residues 286–290 (FTLAE) and Asn-376 each bind substrate. Residue 398–399 (EC) coordinates ATP.

The protein belongs to the class-II aminoacyl-tRNA synthetase family. In terms of assembly, homodimer.

The protein resides in the cytoplasm. The catalysed reaction is tRNA(Gly) + glycine + ATP = glycyl-tRNA(Gly) + AMP + diphosphate. Its function is as follows. Catalyzes the attachment of glycine to tRNA(Gly). Is also able produce diadenosine tetraphosphate (Ap4A), a universal pleiotropic signaling molecule needed for cell regulation pathways, by direct condensation of 2 ATPs. The sequence is that of Putative glycine--tRNA ligase, cytoplasmic from Arabidopsis thaliana (Mouse-ear cress).